We begin with the raw amino-acid sequence, 317 residues long: L-lactate dehydrogenase (317 aa).

Residues Val18, Asp39, Lys44, Tyr69, and 83-84 (GA) each bind NAD(+). Substrate-binding positions include Gln86, Arg92, and 124 to 127 (NPVD). NAD(+) is bound by residues 122-124 (VTN) and Ser147. Residue 152-155 (DTAR) participates in substrate binding. Residues Arg157 and His172 each coordinate beta-D-fructose 1,6-bisphosphate. Catalysis depends on His179, which acts as the Proton acceptor. Residue Tyr225 is modified to Phosphotyrosine. Position 234 (Thr234) interacts with substrate.

Belongs to the LDH/MDH superfamily. LDH family. Homotetramer.

Its subcellular location is the cytoplasm. The catalysed reaction is (S)-lactate + NAD(+) = pyruvate + NADH + H(+). It participates in fermentation; pyruvate fermentation to lactate; (S)-lactate from pyruvate: step 1/1. With respect to regulation, allosterically activated by fructose 1,6-bisphosphate (FBP). Its function is as follows. Catalyzes the conversion of lactate to pyruvate. The chain is L-lactate dehydrogenase from Acetivibrio thermocellus (strain ATCC 27405 / DSM 1237 / JCM 9322 / NBRC 103400 / NCIMB 10682 / NRRL B-4536 / VPI 7372) (Clostridium thermocellum).